The following is a 206-amino-acid chain: Transmembrane emp24 domain-containing protein bai (206 aa).

The N-terminal stretch at 1–20 is a signal peptide; the sequence is MLKSLLCILLIFGCLCRIHG. Residues 21-172 are Lumenal-facing; sequence VMFHLTPNTQ…RDTNEKTNSR (152 aa). A GOLD domain is found at 30–140; that stretch reads QKCLKEDIQA…LKPLEVDLKR (111 aa). A helical membrane pass occupies residues 173–193; that stretch reads VLFFSIFSMCCLLGLATWQVL. The Cytoplasmic segment spans residues 194–206; sequence YLRRYFKAKKLIE.

Belongs to the EMP24/GP25L family.

The protein localises to the membrane. Its function is as follows. Eca and bai are essential, though not redundant, for dorsoventral patterning of the embryo. Specifically required during early embryogenesis for the activity of maternal tkv, while the zygotic tkv is not affected. The protein is Transmembrane emp24 domain-containing protein bai of Drosophila grimshawi (Hawaiian fruit fly).